Here is a 180-residue protein sequence, read N- to C-terminus: Putative manganese efflux pump MntP (180 aa).

6 helical membrane-spanning segments follow: residues 4-24, 40-60, 64-84, 103-123, 129-149, and 156-176; these read FVTI…VALG, LTIG…GKWL, FDVI…VQMA, LLLF…SFGI, FVTV…GLIV, and FLGA…GLKI.

It belongs to the MntP (TC 9.B.29) family.

It is found in the cell membrane. Functionally, probably functions as a manganese efflux pump. This chain is Putative manganese efflux pump MntP, found in Shouchella clausii (strain KSM-K16) (Alkalihalobacillus clausii).